The sequence spans 187 residues: Segregation and condensation protein B (187 aa).

The protein belongs to the ScpB family. In terms of assembly, homodimer. Homodimerization may be required to stabilize the binding of ScpA to the Smc head domains. Component of a cohesin-like complex composed of ScpA, ScpB and the Smc homodimer, in which ScpA and ScpB bind to the head domain of Smc. The presence of the three proteins is required for the association of the complex with DNA.

Its subcellular location is the cytoplasm. Its function is as follows. Participates in chromosomal partition during cell division. May act via the formation of a condensin-like complex containing Smc and ScpA that pull DNA away from mid-cell into both cell halves. This Agathobacter rectalis (strain ATCC 33656 / DSM 3377 / JCM 17463 / KCTC 5835 / VPI 0990) (Eubacterium rectale) protein is Segregation and condensation protein B.